Consider the following 208-residue polypeptide: ATP-dependent Clp protease proteolytic subunit (208 aa).

Ser107 serves as the catalytic Nucleophile. His132 is a catalytic residue.

Belongs to the peptidase S14 family. Fourteen ClpP subunits assemble into 2 heptameric rings which stack back to back to give a disk-like structure with a central cavity, resembling the structure of eukaryotic proteasomes.

It is found in the cytoplasm. The catalysed reaction is Hydrolysis of proteins to small peptides in the presence of ATP and magnesium. alpha-casein is the usual test substrate. In the absence of ATP, only oligopeptides shorter than five residues are hydrolyzed (such as succinyl-Leu-Tyr-|-NHMec, and Leu-Tyr-Leu-|-Tyr-Trp, in which cleavage of the -Tyr-|-Leu- and -Tyr-|-Trp bonds also occurs).. Functionally, cleaves peptides in various proteins in a process that requires ATP hydrolysis. Has a chymotrypsin-like activity. Plays a major role in the degradation of misfolded proteins. The protein is ATP-dependent Clp protease proteolytic subunit of Methylobacterium radiotolerans (strain ATCC 27329 / DSM 1819 / JCM 2831 / NBRC 15690 / NCIMB 10815 / 0-1).